We begin with the raw amino-acid sequence, 231 residues long: Large ribosomal subunit protein uL1 (231 aa).

It belongs to the universal ribosomal protein uL1 family. In terms of assembly, part of the 50S ribosomal subunit.

Functionally, binds directly to 23S rRNA. The L1 stalk is quite mobile in the ribosome, and is involved in E site tRNA release. Protein L1 is also a translational repressor protein, it controls the translation of the L11 operon by binding to its mRNA. The polypeptide is Large ribosomal subunit protein uL1 (Pseudomonas entomophila (strain L48)).